The sequence spans 265 residues: Imidazole glycerol phosphate synthase subunit HisF (265 aa).

Catalysis depends on residues aspartate 11 and aspartate 130.

It belongs to the HisA/HisF family. In terms of assembly, heterodimer of HisH and HisF.

The protein resides in the cytoplasm. It catalyses the reaction 5-[(5-phospho-1-deoxy-D-ribulos-1-ylimino)methylamino]-1-(5-phospho-beta-D-ribosyl)imidazole-4-carboxamide + L-glutamine = D-erythro-1-(imidazol-4-yl)glycerol 3-phosphate + 5-amino-1-(5-phospho-beta-D-ribosyl)imidazole-4-carboxamide + L-glutamate + H(+). It functions in the pathway amino-acid biosynthesis; L-histidine biosynthesis; L-histidine from 5-phospho-alpha-D-ribose 1-diphosphate: step 5/9. Its function is as follows. IGPS catalyzes the conversion of PRFAR and glutamine to IGP, AICAR and glutamate. The HisF subunit catalyzes the cyclization activity that produces IGP and AICAR from PRFAR using the ammonia provided by the HisH subunit. The sequence is that of Imidazole glycerol phosphate synthase subunit HisF from Idiomarina loihiensis (strain ATCC BAA-735 / DSM 15497 / L2-TR).